A 460-amino-acid polypeptide reads, in one-letter code: Cell death abnormality protein 8 (460 aa).

Over Met-1–Cys-45 the chain is Cytoplasmic. Residues Phe-46 to Phe-66 traverse the membrane as a helical segment. At His-67 to Ala-77 the chain is on the extracellular side. The helical transmembrane segment at Leu-78–Met-98 threads the bilayer. Residues Leu-99–Arg-123 are Cytoplasmic-facing. The helical transmembrane segment at Phe-124 to Tyr-144 threads the bilayer. At Tyr-145–Trp-219 the chain is on the extracellular side. A helical transmembrane segment spans residues Leu-220–Val-240. The Cytoplasmic segment spans residues Gln-241–Arg-274. The chain crosses the membrane as a helical span at residues Ile-275–Gly-295. Topologically, residues His-296–Lys-320 are extracellular. Residues Leu-321 to Asn-341 form a helical membrane-spanning segment. Topologically, residues Thr-342–Glu-353 are cytoplasmic. A helical membrane pass occupies residues Phe-354–Ile-374. The Extracellular portion of the chain corresponds to Glu-375 to Arg-378. The helical transmembrane segment at Ile-379–Phe-399 threads the bilayer. Residues His-400–Asn-460 lie on the Cytoplasmic side of the membrane.

The protein belongs to the XK family. In terms of processing, cleavage by ced-3 activates ced-8 function in promoting phosphatidylserine exposure at the surface of apoptotic cells.

It localises to the cell membrane. Acts downstream of ced-9 and caspase ced-3 to promote phosphatidylserine exposure on apoptotic cell surface, possibly by mediating phospholipid scrambling. Phosphatidylserine is a specific marker only present at the surface of apoptotic cells and acts as a specific signal for engulfment. Regulates apoptosis kinetics during embryonic development. Not required for engulfment of germ cell corpses. This is Cell death abnormality protein 8 from Caenorhabditis briggsae.